A 600-amino-acid chain; its full sequence is Mitoguardin 1 (600 aa).

2 consecutive transmembrane segments (helical) span residues 15-32 and 38-58; these read TYAV…YSLS and PVAK…IFLA. Phosphoserine occurs at positions 257 and 261.

This sequence belongs to the mitoguardin family. Homodimer and heterodimer; forms heterodimers with MIGA2. Interacts with PLD6/MitoPLD.

It is found in the mitochondrion outer membrane. Its function is as follows. Regulator of mitochondrial fusion. Acts by forming homo- and heterodimers at the mitochondrial outer membrane and facilitating the formation of PLD6/MitoPLD dimers. May act by regulating phospholipid metabolism via PLD6/MitoPLD. This is Mitoguardin 1 from Mus musculus (Mouse).